A 338-amino-acid polypeptide reads, in one-letter code: Lipoate-protein ligase A (338 aa).

The BPL/LPL catalytic domain occupies Pro29–Val216. Residues Arg71, Gly76–Phe79, and Lys134 contribute to the ATP site. Residue Lys134 coordinates (R)-lipoate.

Belongs to the LplA family. In terms of assembly, monomer.

It localises to the cytoplasm. The catalysed reaction is L-lysyl-[lipoyl-carrier protein] + (R)-lipoate + ATP = N(6)-[(R)-lipoyl]-L-lysyl-[lipoyl-carrier protein] + AMP + diphosphate + H(+). Its pathway is protein modification; protein lipoylation via exogenous pathway; protein N(6)-(lipoyl)lysine from lipoate: step 1/2. The protein operates within protein modification; protein lipoylation via exogenous pathway; protein N(6)-(lipoyl)lysine from lipoate: step 2/2. Catalyzes both the ATP-dependent activation of exogenously supplied lipoate to lipoyl-AMP and the transfer of the activated lipoyl onto the lipoyl domains of lipoate-dependent enzymes. This Klebsiella pneumoniae subsp. pneumoniae (strain ATCC 700721 / MGH 78578) protein is Lipoate-protein ligase A.